The following is a 118-amino-acid chain: Large ribosomal subunit protein uL24 (118 aa).

The protein belongs to the universal ribosomal protein uL24 family. As to quaternary structure, part of the 50S ribosomal subunit.

In terms of biological role, one of two assembly initiator proteins, it binds directly to the 5'-end of the 23S rRNA, where it nucleates assembly of the 50S subunit. Its function is as follows. One of the proteins that surrounds the polypeptide exit tunnel on the outside of the subunit. This Prochlorococcus marinus (strain MIT 9303) protein is Large ribosomal subunit protein uL24.